The sequence spans 185 residues: Peptidyl-tRNA hydrolase (185 aa).

Position 14 (tyrosine 14) interacts with tRNA. Histidine 19 functions as the Proton acceptor in the catalytic mechanism. TRNA contacts are provided by tyrosine 65, asparagine 67, and asparagine 113.

It belongs to the PTH family. As to quaternary structure, monomer.

It is found in the cytoplasm. The enzyme catalyses an N-acyl-L-alpha-aminoacyl-tRNA + H2O = an N-acyl-L-amino acid + a tRNA + H(+). In terms of biological role, hydrolyzes ribosome-free peptidyl-tRNAs (with 1 or more amino acids incorporated), which drop off the ribosome during protein synthesis, or as a result of ribosome stalling. Catalyzes the release of premature peptidyl moieties from peptidyl-tRNA molecules trapped in stalled 50S ribosomal subunits, and thus maintains levels of free tRNAs and 50S ribosomes. This chain is Peptidyl-tRNA hydrolase, found in Rickettsia rickettsii (strain Iowa).